Here is a 345-residue protein sequence, read N- to C-terminus: Myb/SANT-like DNA-binding domain-containing protein 4 (345 aa).

Residues 4–77 form the Myb-like domain; it reads LKRKRKSNFS…EVKRRYLDWR (74 aa). Lys9 participates in a covalent cross-link: Glycyl lysine isopeptide (Lys-Gly) (interchain with G-Cter in SUMO2). Ser106 carries the phosphoserine modification. Residues Lys114 and Lys142 each participate in a glycyl lysine isopeptide (Lys-Gly) (interchain with G-Cter in SUMO2) cross-link. The tract at residues 141-175 is disordered; it reads VKVEEEERDPQSPEFEIEEEEEMLSSVIPDSRREN. Thr188 is modified (phosphothreonine). Residues 202 to 344 adopt a coiled-coil conformation; that stretch reads HLLMNIEKQK…RLRIQKEGHL (143 aa). Glycyl lysine isopeptide (Lys-Gly) (interchain with G-Cter in SUMO2) cross-links involve residues Lys237, Lys254, and Lys273.

This chain is Myb/SANT-like DNA-binding domain-containing protein 4 (Msantd4), found in Rattus norvegicus (Rat).